Consider the following 130-residue polypeptide: Small ribosomal subunit protein uS9 (130 aa).

Residues 102-130 (GLLTRDSRMKERKKPGLKGARRAPQFSKR) form a disordered region. Over residues 111 to 130 (KERKKPGLKGARRAPQFSKR) the composition is skewed to basic residues.

The protein belongs to the universal ribosomal protein uS9 family.

The polypeptide is Small ribosomal subunit protein uS9 (Listeria monocytogenes serovar 1/2a (strain ATCC BAA-679 / EGD-e)).